A 748-amino-acid chain; its full sequence is Catalase-peroxidase (748 aa).

Positions 91 to 236 (WHSAGTYRVG…LAAVQMGLIY (146 aa)) form a cross-link, tryptophyl-tyrosyl-methioninium (Trp-Tyr) (with M-262). The active-site Proton acceptor is the His-92. A disordered region spans residues 201–223 (AQPVADKAGHGKEHGRTDGGRNL). Residues 207-221 (KAGHGKEHGRTDGGR) are compositionally biased toward basic and acidic residues. Residues 236 to 262 (YVNPEGPDGNPDPQASAHDIRETFARM) constitute a cross-link (tryptophyl-tyrosyl-methioninium (Tyr-Met) (with W-91)). His-277 is a heme b binding site.

It belongs to the peroxidase family. Peroxidase/catalase subfamily. Homodimer or homotetramer. The cofactor is heme b. Post-translationally, formation of the three residue Trp-Tyr-Met cross-link is important for the catalase, but not the peroxidase activity of the enzyme.

It carries out the reaction H2O2 + AH2 = A + 2 H2O. The catalysed reaction is 2 H2O2 = O2 + 2 H2O. In terms of biological role, bifunctional enzyme with both catalase and broad-spectrum peroxidase activity. The polypeptide is Catalase-peroxidase (Bordetella avium (strain 197N)).